The primary structure comprises 456 residues: Dothistromin biosynthesis regulatory protein aflJ (456 aa).

Residues 74–143 (LARENQLLAC…PKPGYVAHSG (70 aa)) form the HTH iclR-type domain. The segment at residues 104–123 (YSDVADLACVPVDQLRRIAR) is a DNA-binding region (H-T-H motif). Residues 290–300 (KLHNGLSTPPE) show a composition bias toward polar residues. Residues 290-314 (KLHNGLSTPPESDTGPAARAAKASE) form a disordered region.

Its subcellular location is the nucleus. Transcription coactivator involved in regulation of the dothistromin biosynthesis gene cluster with aflR. The polypeptide is Dothistromin biosynthesis regulatory protein aflJ (Dothistroma septosporum (strain NZE10 / CBS 128990) (Red band needle blight fungus)).